Here is a 433-residue protein sequence, read N- to C-terminus: Arrestin domain-containing protein 1 (433 aa).

Disordered regions lie at residues 296–322 (GLGL…AEAA) and 349–372 (LSSV…PLHP). Over residues 301–312 (PGAPPLVVPSAP) the composition is skewed to pro residues. Short sequence motifs (PPxY motif) lie at residues 402-405 (PPEY) and 415-418 (PPSY).

The protein belongs to the arrestin family. As to quaternary structure, interacts (via PPxY motifs) with ITCH (via WW domains); the interaction is direct and participates in the recruitment of the ubiquitin-protein ligase ITCH to the NOTCH1 receptor. Interacts with ARRB1 and ARRB2; the interaction is direct. Interacts with TSG101; may recruit TSG101 to the plasma membrane. Interacts (via PPxY motifs) with WWP2 (via WW domains); ubiquitinates ARRDC1. Interacts with SLC11A2; controls the incorporation of SLC11A2 into extracellular vesicles through an ubiquitination-dependent mechanism. Interacts with WWP1 (via WW domains). Interacts with NEDD4 (via WW domains). Interacts with PDCD6IP. Post-translationally, ubiquitinated. Ubiquitination by WWP2; promotes localization to extracellular microvesicles. Ubiquitinated by WWP1.

It localises to the cell membrane. Its function is as follows. Functions as an adapter recruiting ubiquitin-protein ligases to their specific substrates. Through an ubiquitination-dependent mechanism plays for instance a role in the incorporation of SLC11A2 into extracellular vesicles. More generally, plays a role in the extracellular transport of proteins between cells through the release in the extracellular space of microvesicles. By participating in the ITCH-mediated ubiquitination and subsequent degradation of NOTCH1, negatively regulates the NOTCH signaling pathway. The polypeptide is Arrestin domain-containing protein 1 (Homo sapiens (Human)).